The following is a 560-amino-acid chain: MSETINTAAQFPSFEKPTVQFNEKGWGPCELPDTFKDVPYQPFSKNDRLGKICDWTNTSNNDKKYQNKYASSFGTGNQYSYYHEEDETTFHLVDTARVQKPPHQRGRFRNMRNSRSGRGRNARGGLNTHGMTTLSGKNVKARDPRHGRGMGKKFGHRGPPPKMRESSVAVRADWASIEEMDFPRLIKLSLPNIKEGVDIVTCGTLEYYDKTYDRINVKNEKPLQKIDRIVHTVTTTDDPVIRRLSKTVGNVFATDAILATIMCSTRSNYSWDIVIEKVGDKIFMDKRDHTEFDLLTVNESSVEPPTDDDSSCNSPRNLAIEATFINHNFSQQVLKTGDQEPKYKFEESNPFISEDEDIQVASVGYRYKKWELGSDIVLVARCEHDGVLQTPSGDSQFMTIKALNEWDSKLANGVEWRQKLDTQRGAVLANELRNNACKLAKWTVQAVLAGSDQLKLGYVSRINPRDHSRHVILGTQQFKPHEFATQINLSMDNAWGILRCIIDLVMKQKDGKYLIMKDPNKPIIRLYDIPDNTFDSDDSDDGEGDDEGFQQVYNYAHNKI.

The interval 98–166 (VQKPPHQRGR…RGPPPKMRES (69 aa)) is disordered. The span at 100–121 (KPPHQRGRFRNMRNSRSGRGRN) shows a compositional bias: basic residues. T128 is subject to Phosphothreonine. Basic residues predominate over residues 147 to 156 (GRGMGKKFGH). Positions 291 to 305 (EFDLLTVNESSVEPP) are RNA gate.

The protein belongs to the eIF-3 subunit D family. In terms of assembly, component of the eukaryotic translation initiation factor 3 (eIF-3) complex. The eIF-3 complex interacts with pix.

It is found in the cytoplasm. MRNA cap-binding component of the eukaryotic translation initiation factor 3 (eIF-3) complex, which is involved in protein synthesis of a specialized repertoire of mRNAs and, together with other initiation factors, stimulates binding of mRNA and methionyl-tRNAi to the 40S ribosome. The eIF-3 complex specifically targets and initiates translation of a subset of mRNAs involved in cell proliferation. In the eIF-3 complex, eif3d specifically recognizes and binds the 7-methylguanosine cap of a subset of mRNAs. The sequence is that of Eukaryotic translation initiation factor 3 subunit D-1 from Drosophila yakuba (Fruit fly).